Here is a 229-residue protein sequence, read N- to C-terminus: Large ribosomal subunit protein uL1 (229 aa).

It belongs to the universal ribosomal protein uL1 family. As to quaternary structure, part of the 50S ribosomal subunit.

In terms of biological role, binds directly to 23S rRNA. The L1 stalk is quite mobile in the ribosome, and is involved in E site tRNA release. Protein L1 is also a translational repressor protein, it controls the translation of the L11 operon by binding to its mRNA. In Thermus thermophilus (strain ATCC BAA-163 / DSM 7039 / HB27), this protein is Large ribosomal subunit protein uL1.